Consider the following 430-residue polypeptide: MKANRDFGRDGGPFSITPNRFQPKSSGNPIFRQKTIRTVGIIALTLVLFLFFHRSFFSSFGEFPSFSSTANAPNSDVQEYDLRKVMNAKFTGDYSPKEKVLICAPLRNAAEHLNMFFGHMNNLTYPHELIDLAFLISDTDDNTLEVLKQHLDAIQNDEDESKHFNNVLIMLKDFGAIFGQEFSDRHGFAAQGPRRKLMARARNWLLSAAIQPYHSWVYWRDVDVETAPNTILEDLMRHDKDIIVPNVYRPLPDWLGNEQPYDLNSWAESETALQLADTLGEDDVIVEGYAEYATWRPHLAYLRDPNGDPSVEMPLDGIGGVSIMSKAKVHLEGCEFPAFSFEKHAETEGFGKMAKRMGFSVYGLPHYVIWHIYEPSDDDKRIMAEMERERKEREAAELEEAKKYQTAGFTQPDDQGAEEGPLAHADDHVD.

A disordered region spans residues 1-28; sequence MKANRDFGRDGGPFSITPNRFQPKSSGN. Residues 1-37 are Cytoplasmic-facing; the sequence is MKANRDFGRDGGPFSITPNRFQPKSSGNPIFRQKTIR. Residues 16–28 show a composition bias toward polar residues; it reads ITPNRFQPKSSGN. A helical; Signal-anchor for type II membrane protein membrane pass occupies residues 38-57; that stretch reads TVGIIALTLVLFLFFHRSFF. Over 58 to 430 the chain is Lumenal; sequence SSFGEFPSFS…PLAHADDHVD (373 aa). N-linked (GlcNAc...) asparagine glycosylation occurs at Asn122. Positions 387–403 are enriched in basic and acidic residues; sequence ERERKEREAAELEEAKK. Positions 387 to 430 are disordered; it reads ERERKEREAAELEEAKKYQTAGFTQPDDQGAEEGPLAHADDHVD.

This sequence belongs to the ANP1/MMN9/VAN1 family. As to quaternary structure, component of the M-Pol II complex.

It is found in the endoplasmic reticulum membrane. It localises to the golgi apparatus membrane. In terms of biological role, the M-Pol II complex possesses alpha-1,6-mannosyltransferase activity and is probably involved in the elongation of the mannan backbone of N-linked glycans on cell wall and periplasmic proteins. This chain is Mannan polymerase II complex anp1 subunit (anp1), found in Schizosaccharomyces pombe (strain 972 / ATCC 24843) (Fission yeast).